Consider the following 252-residue polypeptide: UPF0246 protein Fjoh_4905 (252 aa).

It belongs to the UPF0246 family.

In Flavobacterium johnsoniae (strain ATCC 17061 / DSM 2064 / JCM 8514 / BCRC 14874 / CCUG 350202 / NBRC 14942 / NCIMB 11054 / UW101) (Cytophaga johnsonae), this protein is UPF0246 protein Fjoh_4905.